The sequence spans 298 residues: Protoheme IX farnesyltransferase (298 aa).

Transmembrane regions (helical) follow at residues 19–39 (VMSLVVFTAFVGLWIAPQPVN), 40–60 (PFVAFCAVLFIALGGGASGAL), 91–111 (LAVGIALSGLSVMMLGAGGNW), 112–132 (FAAGFLAFTIFFYAVVYTIWL), 140–160 (IVIGGAAGAFPPMIGWALPTG), 167–187 (LLMFALIFFWTPPHFWALALF), 213–233 (IFAYTLVLAPFALWLGFTSVG), 236–256 (LYLAVSVVLNALFIAGGWQIL), and 277–297 (LSLYYTFLHFLALLVQHWVGG).

Belongs to the UbiA prenyltransferase family. Protoheme IX farnesyltransferase subfamily. In terms of assembly, interacts with CtaA.

The protein localises to the cell inner membrane. The enzyme catalyses heme b + (2E,6E)-farnesyl diphosphate + H2O = Fe(II)-heme o + diphosphate. The protein operates within porphyrin-containing compound metabolism; heme O biosynthesis; heme O from protoheme: step 1/1. In terms of biological role, converts heme B (protoheme IX) to heme O by substitution of the vinyl group on carbon 2 of heme B porphyrin ring with a hydroxyethyl farnesyl side group. This chain is Protoheme IX farnesyltransferase, found in Paracoccus denitrificans.